The following is a 207-amino-acid chain: Pyridoxal 5'-phosphate synthase subunit PdxT (207 aa).

Residue 53–55 (GES) participates in L-glutamine binding. The Nucleophile role is filled by Cys-85. Residues Arg-114 and 143–144 (IR) contribute to the L-glutamine site. Catalysis depends on charge relay system residues His-184 and Glu-186.

Belongs to the glutaminase PdxT/SNO family. In terms of assembly, in the presence of PdxS, forms a dodecamer of heterodimers. Only shows activity in the heterodimer.

It carries out the reaction aldehydo-D-ribose 5-phosphate + D-glyceraldehyde 3-phosphate + L-glutamine = pyridoxal 5'-phosphate + L-glutamate + phosphate + 3 H2O + H(+). The enzyme catalyses L-glutamine + H2O = L-glutamate + NH4(+). It functions in the pathway cofactor biosynthesis; pyridoxal 5'-phosphate biosynthesis. Catalyzes the hydrolysis of glutamine to glutamate and ammonia as part of the biosynthesis of pyridoxal 5'-phosphate. The resulting ammonia molecule is channeled to the active site of PdxS. The polypeptide is Pyridoxal 5'-phosphate synthase subunit PdxT (Acidothermus cellulolyticus (strain ATCC 43068 / DSM 8971 / 11B)).